The following is an 883-amino-acid chain: Phosphoenolpyruvate carboxylase (883 aa).

Residues H138 and K546 contribute to the active site.

This sequence belongs to the PEPCase type 1 family. Mg(2+) is required as a cofactor.

It catalyses the reaction oxaloacetate + phosphate = phosphoenolpyruvate + hydrogencarbonate. Its function is as follows. Forms oxaloacetate, a four-carbon dicarboxylic acid source for the tricarboxylic acid cycle. The chain is Phosphoenolpyruvate carboxylase from Escherichia coli O45:K1 (strain S88 / ExPEC).